The primary structure comprises 214 residues: Cytochrome b (214 aa).

4 helical membrane passes run phenylalanine 31 to isoleucine 51, tryptophan 75 to isoleucine 96, tryptophan 111 to leucine 131, and phenylalanine 176 to leucine 196. The heme b site is built by histidine 81 and histidine 95. Heme b-binding residues include histidine 180 and histidine 194. Histidine 199 contacts a ubiquinone.

The protein belongs to the cytochrome b family. In terms of assembly, the cytochrome bc1 complex contains 3 respiratory subunits (MT-CYB, CYC1 and UQCRFS1), 2 core proteins (UQCRC1 and UQCRC2) and probably 6 low-molecular weight proteins. Heme b serves as cofactor.

It is found in the mitochondrion inner membrane. Component of the ubiquinol-cytochrome c reductase complex (complex III or cytochrome b-c1 complex) that is part of the mitochondrial respiratory chain. The b-c1 complex mediates electron transfer from ubiquinol to cytochrome c. Contributes to the generation of a proton gradient across the mitochondrial membrane that is then used for ATP synthesis. The chain is Cytochrome b (MT-CYB) from Trimeresurus stejnegeri (Chinese green tree viper).